A 196-amino-acid polypeptide reads, in one-letter code: Holliday junction branch migration complex subunit RuvA (196 aa).

A domain I region spans residues 1-63; it reads MINKICGKIV…EDEIRLFGFL (63 aa). Residues 64-135 are domain II; it reads NVSEREVFEK…KLRGKLVKVN (72 aa). Residues 135 to 138 form a flexible linker region; that stretch reads NEAS. The segment at 139–196 is domain III; it reads SGVLKFKELEQSIVNMGFDRKLVAAAIKEIMLIDEFLMLRQVDQEQFLFREILRKLSG.

It belongs to the RuvA family. As to quaternary structure, homotetramer. Forms an RuvA(8)-RuvB(12)-Holliday junction (HJ) complex. HJ DNA is sandwiched between 2 RuvA tetramers; dsDNA enters through RuvA and exits via RuvB. An RuvB hexamer assembles on each DNA strand where it exits the tetramer. Each RuvB hexamer is contacted by two RuvA subunits (via domain III) on 2 adjacent RuvB subunits; this complex drives branch migration. In the full resolvosome a probable DNA-RuvA(4)-RuvB(12)-RuvC(2) complex forms which resolves the HJ.

It localises to the cytoplasm. In terms of biological role, the RuvA-RuvB-RuvC complex processes Holliday junction (HJ) DNA during genetic recombination and DNA repair, while the RuvA-RuvB complex plays an important role in the rescue of blocked DNA replication forks via replication fork reversal (RFR). RuvA specifically binds to HJ cruciform DNA, conferring on it an open structure. The RuvB hexamer acts as an ATP-dependent pump, pulling dsDNA into and through the RuvAB complex. HJ branch migration allows RuvC to scan DNA until it finds its consensus sequence, where it cleaves and resolves the cruciform DNA. The sequence is that of Holliday junction branch migration complex subunit RuvA from Borrelia turicatae (strain 91E135).